A 591-amino-acid chain; its full sequence is MKILIIFIIFIISYISGFEIPKGFGIGLVIPDAECLNYIGDPIDQQLCNSKLQNNGDRIYTTTNSQIDSQTNIKKSFEAITFLQDQCKDLLFAQFGICDIYLAPCIEVTLTPLKSISLPQRFCKSVCDRMVSNCPRLEEQMDCSNSFLFPEIGTFYDLSPYGYTIDNGTFAVPCSDPTIFFNQVSSNSSFIEICPSPLLLKNSSDPEYAANKGYSYLSPSNCVLPCPVPNYSNQKWDQLLTMSKILSTISFILSLYNVLTFGIINKKVSDPHKCTCFFSGSIALVNLCDIITYGIGYEELLCPEPGRSAKQQLDPVCGLTGAFFHLGITYCVLWSMTMGLVLYCSVKRQKWFKFNYFLIGNTTFTITTVVIAAATSKFEAGLGSIECWIRDRWYAISLFWIPCGIALLIGSFCIIAVIHEVYKTSKKSISNRNDLLQRELKPLLIVIFISGSFLYLFIFFFDIERKFGGYRSAVEDYVLCLLNGSQEECFTTGPSYVPYFLFYLVIRWFGIIFFLFYGTSNIARKIWVQNKIWKSISSSISPKSTPKSSPKNSDSKINSNSTNNNNMILNDNNDKNLNEKKAVELESIKIN.

An N-terminal signal peptide occupies residues 1-17; the sequence is MKILIIFIIFIISYISG. The Extracellular segment spans residues 18–244; the sequence is FEIPKGFGIG…KWDQLLTMSK (227 aa). Residues 30 to 177 form the FZ domain; sequence IPDAECLNYI…GTFAVPCSDP (148 aa). Disulfide bonds link Cys35-Cys105, Cys48-Cys98, and Cys123-Cys174. Asn167, Asn187, Asn202, and Asn230 each carry an N-linked (GlcNAc...) asparagine glycan. The chain crosses the membrane as a helical span at residues 245 to 265; it reads ILSTISFILSLYNVLTFGIIN. Residues 266-275 are Cytoplasmic-facing; that stretch reads KKVSDPHKCT. Residues 276–296 form a helical membrane-spanning segment; the sequence is CFFSGSIALVNLCDIITYGIG. The Extracellular segment spans residues 297 to 321; that stretch reads YEELLCPEPGRSAKQQLDPVCGLTG. A helical membrane pass occupies residues 322–342; the sequence is AFFHLGITYCVLWSMTMGLVL. Residues 343–353 lie on the Cytoplasmic side of the membrane; sequence YCSVKRQKWFK. The chain crosses the membrane as a helical span at residues 354 to 374; sequence FNYFLIGNTTFTITTVVIAAA. Residues 375–397 are Extracellular-facing; that stretch reads TSKFEAGLGSIECWIRDRWYAIS. Residues 398-418 form a helical membrane-spanning segment; the sequence is LFWIPCGIALLIGSFCIIAVI. The Cytoplasmic portion of the chain corresponds to 419 to 442; it reads HEVYKTSKKSISNRNDLLQRELKP. A helical membrane pass occupies residues 443–463; that stretch reads LLIVIFISGSFLYLFIFFFDI. Topologically, residues 464-495 are extracellular; it reads ERKFGGYRSAVEDYVLCLLNGSQEECFTTGPS. N-linked (GlcNAc...) asparagine glycosylation occurs at Asn483. The helical transmembrane segment at 496–516 threads the bilayer; sequence YVPYFLFYLVIRWFGIIFFLF. Over 517–591 the chain is Cytoplasmic; it reads YGTSNIARKI…AVELESIKIN (75 aa). The span at 538–571 shows a compositional bias: low complexity; it reads SSISPKSTPKSSPKNSDSKINSNSTNNNNMILND. The disordered stretch occupies residues 538-573; it reads SSISPKSTPKSSPKNSDSKINSNSTNNNNMILNDNN.

It belongs to the G-protein coupled receptor Fz/Smo family.

It localises to the membrane. The sequence is that of Frizzled and smoothened-like protein F (fslF) from Dictyostelium discoideum (Social amoeba).